A 114-amino-acid chain; its full sequence is UPF0342 protein LSEI_1724 (114 aa).

The protein belongs to the UPF0342 family.

This is UPF0342 protein LSEI_1724 from Lacticaseibacillus paracasei (strain ATCC 334 / BCRC 17002 / CCUG 31169 / CIP 107868 / KCTC 3260 / NRRL B-441) (Lactobacillus paracasei).